Here is a 301-residue protein sequence, read N- to C-terminus: GTPase Era (301 aa).

The region spanning 7–175 (YCGFIAIVGR…AAIVRKHLPE (169 aa)) is the Era-type G domain. Positions 15–22 (GRPNVGKS) are G1. 15–22 (GRPNVGKS) is a binding site for GTP. A G2 region spans residues 41-45 (QTTRH). The interval 62–65 (DTPG) is G3. GTP is bound by residues 62–66 (DTPGL) and 124–127 (NKVD). A G4 region spans residues 124 to 127 (NKVD). Residues 154–156 (ISA) form a G5 region. Positions 206–283 (LGAELPYSVT…HLELWVKVKS (78 aa)) constitute a KH type-2 domain.

Belongs to the TRAFAC class TrmE-Era-EngA-EngB-Septin-like GTPase superfamily. Era GTPase family. In terms of assembly, monomer.

Its subcellular location is the cytoplasm. The protein resides in the cell inner membrane. Its function is as follows. An essential GTPase that binds both GDP and GTP, with rapid nucleotide exchange. Plays a role in 16S rRNA processing and 30S ribosomal subunit biogenesis and possibly also in cell cycle regulation and energy metabolism. This is GTPase Era from Escherichia fergusonii (strain ATCC 35469 / DSM 13698 / CCUG 18766 / IAM 14443 / JCM 21226 / LMG 7866 / NBRC 102419 / NCTC 12128 / CDC 0568-73).